A 101-amino-acid polypeptide reads, in one-letter code: Large ribosomal subunit protein uL24 (101 aa).

The protein belongs to the universal ribosomal protein uL24 family. In terms of assembly, part of the 50S ribosomal subunit.

Its function is as follows. One of two assembly initiator proteins, it binds directly to the 5'-end of the 23S rRNA, where it nucleates assembly of the 50S subunit. One of the proteins that surrounds the polypeptide exit tunnel on the outside of the subunit. This is Large ribosomal subunit protein uL24 from Dinoroseobacter shibae (strain DSM 16493 / NCIMB 14021 / DFL 12).